A 49-amino-acid polypeptide reads, in one-letter code: Osteocalcin (49 aa).

Positions 1 to 47 constitute a Gla domain; sequence YLDPGLGAPAPYPDPLEPKREVCELNPDCDELADHIGFQEAYRRFYG. The residue at position 9 (Pro-9) is a Hydroxyproline. Residues Glu-17, Glu-21, Glu-24, and Asp-30 each coordinate Ca(2+). A 4-carboxyglutamate mark is found at Glu-17, Glu-21, and Glu-24. Residues Cys-23 and Cys-29 are joined by a disulfide bond.

It belongs to the osteocalcin/matrix Gla protein family. In terms of processing, gamma-carboxyglutamate residues are formed by vitamin K dependent carboxylation by GGCX. These residues are essential for the binding of calcium. Decarboxylation promotes the hormone activity.

The protein resides in the secreted. The carboxylated form is one of the main organic components of the bone matrix, which constitutes 1-2% of the total bone protein. It acts as a negative regulator of bone formation and is required to limit bone formation without impairing bone resorption or mineralization. The carboxylated form binds strongly to apatite and calcium. Functionally, the uncarboxylated form acts as a hormone secreted by osteoblasts, which regulates different cellular processes, such as energy metabolism, male fertility and brain development. Regulates of energy metabolism by acting as a hormone favoring pancreatic beta-cell proliferation, insulin secretion and sensitivity and energy expenditure. Uncarboxylated osteocalcin hormone also promotes testosterone production in the testes: acts as a ligand for G protein-coupled receptor GPRC6A at the surface of Leydig cells, initiating a signaling response that promotes the expression of enzymes required for testosterone synthesis in a CREB-dependent manner. Also acts as a regulator of brain development: osteocalcin hormone crosses the blood-brain barrier and acts as a ligand for GPR158 on neurons, initiating a signaling response that prevents neuronal apoptosis in the hippocampus, favors the synthesis of all monoamine neurotransmitters and inhibits that of gamma-aminobutyric acid (GABA). Osteocalcin also crosses the placenta during pregnancy and maternal osteocalcin is required for fetal brain development. The sequence is that of Osteocalcin (BGLAP) from Capra hircus (Goat).